The chain runs to 309 residues: Isopentenyl-diphosphate Delta-isomerase II (309 aa).

K112 is a binding site for substrate. Positions 116 and 128 each coordinate Mg(2+). One can recognise a Nudix hydrolase domain in the interval 126 to 278 (LLHRAFSVFL…GLKLSPWFRL (153 aa)). Substrate-binding residues include R147 and K151. C163 is a catalytic residue. S164 is a binding site for substrate. Residues E223 and E225 each coordinate Mg(2+). E225 is an active-site residue.

Belongs to the IPP isomerase type 1 family. Mg(2+) is required as a cofactor.

It catalyses the reaction isopentenyl diphosphate = dimethylallyl diphosphate. It functions in the pathway isoprenoid biosynthesis; dimethylallyl diphosphate biosynthesis; dimethylallyl diphosphate from isopentenyl diphosphate: step 1/1. It participates in porphyrin-containing compound metabolism; chlorophyll biosynthesis. In terms of biological role, catalyzes the 1,3-allylic rearrangement of the homoallylic substrate isopentenyl (IPP) to its highly electrophilic allylic isomer, dimethylallyl diphosphate (DMAPP). The chain is Isopentenyl-diphosphate Delta-isomerase II (IPI2) from Camptotheca acuminata (Happy tree).